The sequence spans 488 residues: Protein DETOXIFICATION 35 (488 aa).

A run of 12 helical transmembrane segments spans residues 38–58 (LWMI…VSSV), 73–93 (AVSI…LGMG), 121–141 (IILF…TPVL), 150–170 (IAVP…SLAF), 187–207 (IAWI…LFII), 218–238 (LAFN…VIGW), 262–282 (IASA…IVLT), 296–316 (SICM…NAAI), 336–356 (VYVT…AIII), 379–401 (AYLL…VAVG), 408–428 (VAYI…YLLG), and 439–459 (WSGM…VLYK).

It belongs to the multi antimicrobial extrusion (MATE) (TC 2.A.66.1) family. Highly expressed in inflorescence tissues, especially in floral epidermal guard cells including those of the anthers, stigma, siliques and nectaries. Also detected in the meristematic zone of the root apex and in the elongation zone through to the fully expanded cells of the differentiation zone.

The protein resides in the vacuole membrane. Its function is as follows. Multidrug and toxin efflux transporter involved in flavonoid metabolism. Required for proper reproductive development. This Arabidopsis thaliana (Mouse-ear cress) protein is Protein DETOXIFICATION 35.